The primary structure comprises 1004 residues: MVYSSSSMSNTNIRRRSVPITIQKSRMDGFAEANQLLSSALEQLDDIIRNGNSTSRSTTTIGSAGPTPIIKKSFRDLLPPPPALRSTFSPRIMENGHSNLAHKQHINDDIDNGNADDERSSREINRQWISTDWKHRTDLGSDGSSGVESPPSDLPTSSSSLFSPPRVYQEFVKAIDEQTMTERPDLETRLKIMQWVAGRTSPSPSMSTVSCPEYPELQDKLHRLAMARDSLQLQVSVLSEQVGAQKEKIKDLETVIALKRNNLTSTEELLQDKYHRIDECQELESKKMDLLAEVSSLKLRYATLEREKNETEKKLRLSQNEMDHVNQSMHGMVVQQQLAHHTNGHSSGGYMSPLREHRSEKNDDEMSQLRTAVQRLMADNEHKSLQINTLRNALDEQMRSRSQQEDFYASQRNYTDNFDVNAQIRRILMDEPSDSMSHSTSFPVSLSSTTSNGKGPRSTVQSSSSYNSSLSAVSPQHNWSSAGAGTPRQLHPIGGNQRVNNITSAQYCSPSPPAARQLAAELDELRRNGNEGANHNYSSASLPRGVGKASSTLTLPSKKLSVASGTSVGELGGSMSSVAQPTPKRNYRAQMNRWINEKLRRKRAVSAPNLVESDDEIARGRNLNNATSQSNLKNFSRERTRSSLRNIFSKLTRSTSQDQSNSFRRGSAARSTSTARLGSTNHLGTVSKRPPLSQFVDWRSEQLADWIAEIGYPQYMNEVSRHVRSGRHFLNMSMNEYEGVLNIKNPVHRKRVAILLRRIEEDIMEPANKWDVHQTLRWLDDIGLPQYKDVFAENVVDGPLLLSLTANDAVEMKVVNAHHYATLARSIQFLKKADFRFNAMEKLIDQNIVEKYPCPDVVVRWTHSATCEWLRKIDLAEFTQNLLFAGVPGALMIYEPSFTAESLAEILQMPPHKTLLRRHLTSHFNQLLGPKIIADKRDFLAAGNYPQISPTGRVKVVKKGFSLTRKKAKNEICLEPEELLCPQVLVHKYPTGAGDNSSFESSNV.

Composition is skewed to low complexity over residues 50–63 (NGNS…TIGS) and 149–161 (SPPS…SSSL). Disordered regions lie at residues 50 to 122 (NGNS…RSSR) and 135 to 161 (HRTD…SSSL). 2 coiled-coil regions span residues 280–328 (CQEL…VNQS) and 364–396 (DEMS…ALDE). Disordered regions lie at residues 341 to 366 (HTNG…DDEM), 432 to 497 (PSDS…GGNQ), 528 to 550 (NGNE…GKAS), and 648 to 686 (FSKL…LGTV). The span at 434-453 (DSMSHSTSFPVSLSSTTSNG) shows a compositional bias: polar residues. Residues 458 to 474 (STVQSSSSYNSSLSAVS) are compositionally biased toward low complexity. Polar residues-rich tracts occupy residues 531–541 (EGANHNYSSAS) and 648–684 (FSKL…NHLG). SAM domains follow at residues 698 to 762 (WRSE…IEED), 770 to 833 (WDVH…LKKA), and 858 to 930 (VVRW…LLGP).

This sequence belongs to the liprin family. Liprin-beta subfamily. Expressed in pharyngeal muscle, particularly posterior bulb, adjacent to the dorsal and ventral cord (but not in ventral cord neurons), and in body wall muscles.

In terms of biological role, involved in the regulation of synaptic function at neuromuscular junctions. Together with the liprin-alpha protein syd-2, may play a role in regulating the structure of the neuronal region, called the active zone, from which synaptic vesicles send neurotransmitter signals across the synapse. Does not seem to be required for neuronal development. May regulate the disassembly of focal adhesions. Does not bind receptor-like tyrosine phosphatases type 2A. This is Liprin-beta homolog from Caenorhabditis elegans.